The following is a 646-amino-acid chain: Long-chain fatty acid transport protein 1 (646 aa).

Residues 1–13 (MRAPGAGSASVAS) lie on the Extracellular side of the membrane. Residues 14-34 (LVLLWLLGLPWTWSTAAALGV) traverse the membrane as a helical segment. Residues 35 to 646 (YVGGGGWRFL…TRICSGAFAL (612 aa)) lie on the Cytoplasmic side of the membrane. The interval 191-475 (EMSGELGKSL…YISESATSKK (285 aa)) is sufficient for oligomerization. 246–257 (YIYTSGTTGLPK) contributes to the AMP binding site.

The protein belongs to the ATP-dependent AMP-binding enzyme family. Self-associates. May function as a homodimer. Interacts with EPRS1; mediates the translocation of SLC27A1 from the cytoplasm to the plasma membrane thereby increasing the uptake of long-chain fatty acids. Interacts with DGAT2 and this interaction is enhanced in the presence of ZFYVE1.

Its subcellular location is the cell membrane. It localises to the endomembrane system. The protein resides in the cytoplasm. The catalysed reaction is a fatty acid(in) = a fatty acid(out). The enzyme catalyses (9Z)-octadecenoate(out) = (9Z)-octadecenoate(in). It catalyses the reaction hexadecanoate(out) = hexadecanoate(in). It carries out the reaction (5Z,8Z,11Z,14Z)-eicosatetraenoate(out) = (5Z,8Z,11Z,14Z)-eicosatetraenoate(in). The catalysed reaction is (9Z,12Z)-octadecadienoate(out) = (9Z,12Z)-octadecadienoate(in). The enzyme catalyses a long-chain fatty acid + ATP + CoA = a long-chain fatty acyl-CoA + AMP + diphosphate. It catalyses the reaction (5Z,8Z,11Z,14Z)-eicosatetraenoate + ATP + CoA = (5Z,8Z,11Z,14Z)-eicosatetraenoyl-CoA + AMP + diphosphate. It carries out the reaction a very long-chain fatty acid + ATP + CoA = a very long-chain fatty acyl-CoA + AMP + diphosphate. The catalysed reaction is tetracosanoate + ATP + CoA = tetracosanoyl-CoA + AMP + diphosphate. Inhibited by Triacsin C. Its function is as follows. Mediates the import of long-chain fatty acids (LCFA) into the cell by facilitating their transport at the plasma membrane. Also functions as an acyl-CoA ligase catalyzing the ATP-dependent formation of fatty acyl-CoA using LCFA and very-long-chain fatty acids (VLCFA) as substrates, which prevents fatty acid efflux from cells and might drive more fatty acid uptake. May act directly as a bona fide transporter, or alternatively, in a cytoplasmic or membrane-associated multimeric protein complex to trap and draw fatty acids towards accumulation. Plays a pivotal role in regulating available LCFA substrates from exogenous sources in tissues undergoing high levels of beta-oxidation or triglyceride synthesis. May be involved in regulation of cholesterol metabolism. Probably involved in fatty acid transport across the blood barrier. This is Long-chain fatty acid transport protein 1 from Bos taurus (Bovine).